We begin with the raw amino-acid sequence, 249 residues long: UPF0758 protein BMEI0718 (249 aa).

The segment at 1-34 is disordered; sequence MAKKKDTPGDGEFPGFSDTLQRTPKLEKPHYAGH. Over residues 24–34 the composition is skewed to basic and acidic residues; it reads PKLEKPHYAGH. The MPN domain maps to 127-249; the sequence is VLGSWDKVIN…HASLRSLRLI (123 aa). Zn(2+) contacts are provided by H198, H200, and D211. The JAMM motif motif lies at 198 to 211; that stretch reads HNHPSGDPTPSRAD.

It belongs to the UPF0758 family.

In Brucella melitensis biotype 1 (strain ATCC 23456 / CCUG 17765 / NCTC 10094 / 16M), this protein is UPF0758 protein BMEI0718.